The primary structure comprises 249 residues: NADH-quinone oxidoreductase subunit C (249 aa).

Belongs to the complex I 30 kDa subunit family. As to quaternary structure, NDH-1 is composed of 14 different subunits. Subunits NuoB, C, D, E, F, and G constitute the peripheral sector of the complex.

It is found in the cell inner membrane. The catalysed reaction is a quinone + NADH + 5 H(+)(in) = a quinol + NAD(+) + 4 H(+)(out). Functionally, NDH-1 shuttles electrons from NADH, via FMN and iron-sulfur (Fe-S) centers, to quinones in the respiratory chain. The immediate electron acceptor for the enzyme in this species is believed to be ubiquinone. Couples the redox reaction to proton translocation (for every two electrons transferred, four hydrogen ions are translocated across the cytoplasmic membrane), and thus conserves the redox energy in a proton gradient. The protein is NADH-quinone oxidoreductase subunit C of Xylella fastidiosa (strain M12).